We begin with the raw amino-acid sequence, 497 residues long: Guanosine-5'-triphosphate,3'-diphosphate pyrophosphatase (497 aa).

This sequence belongs to the GppA/Ppx family. GppA subfamily.

It catalyses the reaction guanosine 3'-diphosphate 5'-triphosphate + H2O = guanosine 3',5'-bis(diphosphate) + phosphate + H(+). The protein operates within purine metabolism; ppGpp biosynthesis; ppGpp from GTP: step 2/2. Its function is as follows. Catalyzes the conversion of pppGpp to ppGpp. Guanosine pentaphosphate (pppGpp) is a cytoplasmic signaling molecule which together with ppGpp controls the 'stringent response', an adaptive process that allows bacteria to respond to amino acid starvation, resulting in the coordinated regulation of numerous cellular activities. This is Guanosine-5'-triphosphate,3'-diphosphate pyrophosphatase from Vibrio parahaemolyticus serotype O3:K6 (strain RIMD 2210633).